We begin with the raw amino-acid sequence, 125 residues long: Small ribosomal subunit protein bS6 (125 aa).

The protein belongs to the bacterial ribosomal protein bS6 family.

Binds together with bS18 to 16S ribosomal RNA. The chain is Small ribosomal subunit protein bS6 from Campylobacter jejuni subsp. jejuni serotype O:23/36 (strain 81-176).